Consider the following 291-residue polypeptide: Ribosomal protein L11 methyltransferase (291 aa).

The S-adenosyl-L-methionine site is built by threonine 136, glycine 159, aspartate 181, and asparagine 228.

The protein belongs to the methyltransferase superfamily. PrmA family.

Its subcellular location is the cytoplasm. It carries out the reaction L-lysyl-[protein] + 3 S-adenosyl-L-methionine = N(6),N(6),N(6)-trimethyl-L-lysyl-[protein] + 3 S-adenosyl-L-homocysteine + 3 H(+). In terms of biological role, methylates ribosomal protein L11. The chain is Ribosomal protein L11 methyltransferase from Sinorhizobium fredii (strain NBRC 101917 / NGR234).